Reading from the N-terminus, the 161-residue chain is Ubiquitin-conjugating enzyme E2Q-like protein 1 (161 aa).

The region spanning 1–154 (MKELQDIARL…VKTHEKYGWV (154 aa)) is the UBC core domain. Residue cysteine 88 is the Glycyl thioester intermediate of the active site.

The protein belongs to the ubiquitin-conjugating enzyme family. In terms of assembly, interacts with FBXW7.

Its subcellular location is the nucleus. The catalysed reaction is S-ubiquitinyl-[E1 ubiquitin-activating enzyme]-L-cysteine + [E2 ubiquitin-conjugating enzyme]-L-cysteine = [E1 ubiquitin-activating enzyme]-L-cysteine + S-ubiquitinyl-[E2 ubiquitin-conjugating enzyme]-L-cysteine.. It functions in the pathway protein modification; protein ubiquitination. In terms of biological role, probable E2 ubiquitin-protein ligase that catalyzes the covalent attachment of ubiquitin to target proteins. May facilitate the monoubiquitination and degradation of MTOR and CCNE1 through interaction with FBXW7. The polypeptide is Ubiquitin-conjugating enzyme E2Q-like protein 1 (UBE2QL1) (Homo sapiens (Human)).